Reading from the N-terminus, the 96-residue chain is Beta-defensin 132 (96 aa).

An N-terminal signal peptide occupies residues M1–G22. 3 cysteine pairs are disulfide-bonded: C27–C55, C35–C49, and C39–C56. Residues H74–S96 are disordered. Basic residues predominate over residues Q76 to K87.

The protein belongs to the beta-defensin family.

It localises to the secreted. Has antibacterial activity. This chain is Beta-defensin 132 (DEFB132), found in Hylobates lar (Lar gibbon).